We begin with the raw amino-acid sequence, 181 residues long: 6,7-dimethyl-8-ribityllumazine synthase (181 aa).

5-amino-6-(D-ribitylamino)uracil-binding positions include phenylalanine 23, 61-63, and 85-87; these read SFE and AVI. A (2S)-2-hydroxy-3-oxobutyl phosphate-binding site is contributed by 90–91; sequence QT. Histidine 93 (proton donor) is an active-site residue. Phenylalanine 118 provides a ligand contact to 5-amino-6-(D-ribitylamino)uracil. Arginine 132 serves as a coordination point for (2S)-2-hydroxy-3-oxobutyl phosphate.

Belongs to the DMRL synthase family.

It catalyses the reaction (2S)-2-hydroxy-3-oxobutyl phosphate + 5-amino-6-(D-ribitylamino)uracil = 6,7-dimethyl-8-(1-D-ribityl)lumazine + phosphate + 2 H2O + H(+). Its pathway is cofactor biosynthesis; riboflavin biosynthesis; riboflavin from 2-hydroxy-3-oxobutyl phosphate and 5-amino-6-(D-ribitylamino)uracil: step 1/2. Functionally, catalyzes the formation of 6,7-dimethyl-8-ribityllumazine by condensation of 5-amino-6-(D-ribitylamino)uracil with 3,4-dihydroxy-2-butanone 4-phosphate. This is the penultimate step in the biosynthesis of riboflavin. This Synechococcus elongatus (strain ATCC 33912 / PCC 7942 / FACHB-805) (Anacystis nidulans R2) protein is 6,7-dimethyl-8-ribityllumazine synthase.